The primary structure comprises 122 residues: Large ribosomal subunit protein uL14 (122 aa).

Belongs to the universal ribosomal protein uL14 family. In terms of assembly, part of the 50S ribosomal subunit. Forms a cluster with proteins L3 and L19. In the 70S ribosome, L14 and L19 interact and together make contacts with the 16S rRNA in bridges B5 and B8.

Its function is as follows. Binds to 23S rRNA. Forms part of two intersubunit bridges in the 70S ribosome. The sequence is that of Large ribosomal subunit protein uL14 from Listeria monocytogenes serotype 4b (strain CLIP80459).